A 246-amino-acid chain; its full sequence is Ribonuclease PH (246 aa).

Phosphate contacts are provided by residues Arg91 and 129–131 (GTR).

This sequence belongs to the RNase PH family. As to quaternary structure, homohexameric ring arranged as a trimer of dimers.

The catalysed reaction is tRNA(n+1) + phosphate = tRNA(n) + a ribonucleoside 5'-diphosphate. Phosphorolytic 3'-5' exoribonuclease that plays an important role in tRNA 3'-end maturation. Removes nucleotide residues following the 3'-CCA terminus of tRNAs; can also add nucleotides to the ends of RNA molecules by using nucleoside diphosphates as substrates, but this may not be physiologically important. Probably plays a role in initiation of 16S rRNA degradation (leading to ribosome degradation) during starvation. The sequence is that of Ribonuclease PH from Burkholderia ambifaria (strain ATCC BAA-244 / DSM 16087 / CCUG 44356 / LMG 19182 / AMMD) (Burkholderia cepacia (strain AMMD)).